The chain runs to 151 residues: MRVWIDADACPKAAKDQVVRFALKRQFEVVLVAGQAQIKPAFACVRLIVVPSGPDAADDYLVEHAVPGELVICSDVPLADRLVKKGLAALDPRGKEFDAQNMGERLAVRNLFTDLREQGQVSGGQAPYGDREKQAFANALDRILTRLARQA.

It belongs to the UPF0178 family.

The polypeptide is UPF0178 protein PFL_5989 (Pseudomonas fluorescens (strain ATCC BAA-477 / NRRL B-23932 / Pf-5)).